Consider the following 1491-residue polypeptide: Chromosome partition protein MukB (1491 aa).

34 to 41 (GGNGAGKS) lines the ATP pocket. 6 coiled-coil regions span residues 302-418 (LIEQ…QYQQ), 488-600 (EVAR…RFES), 638-666 (ELEK…RLAS), 781-806 (RAAR…AKAS), 836-1109 (EQAL…DLRT), and 1210-1239 (VEAI…ISSD). The segment at 667–784 (PGGSNDPRLK…AIPLFGRAAR (118 aa)) is flexible hinge. A disordered region spans residues 1059-1080 (QRRRDELQERLHTSRSRKSEYE).

It belongs to the SMC family. MukB subfamily. As to quaternary structure, homodimerization via its hinge domain. Binds to DNA via its C-terminal region. Interacts, and probably forms a ternary complex, with MukE and MukF via its C-terminal region. The complex formation is stimulated by calcium or magnesium. Interacts with tubulin-related protein FtsZ.

The protein localises to the cytoplasm. It localises to the nucleoid. Functionally, plays a central role in chromosome condensation, segregation and cell cycle progression. Functions as a homodimer, which is essential for chromosome partition. Involved in negative DNA supercoiling in vivo, and by this means organize and compact chromosomes. May achieve or facilitate chromosome segregation by condensation DNA from both sides of a centrally located replisome during cell division. This chain is Chromosome partition protein MukB, found in Vibrio cholerae serotype O1 (strain ATCC 39541 / Classical Ogawa 395 / O395).